Here is a 481-residue protein sequence, read N- to C-terminus: 6-phosphogluconate dehydrogenase, decarboxylating (481 aa).

NADP(+) contacts are provided by residues 11–16 (GLAVMG), 34–36 (NRT), 76–78 (VKA), and asparagine 104. Substrate is bound by residues asparagine 104 and 130-132 (SGG). Lysine 184 (proton acceptor) is an active-site residue. 187–188 (HN) lines the substrate pocket. Glutamate 191 (proton donor) is an active-site residue. The substrate site is built by tyrosine 192, lysine 259, arginine 286, arginine 445, and histidine 451.

This sequence belongs to the 6-phosphogluconate dehydrogenase family. As to quaternary structure, homodimer.

The catalysed reaction is 6-phospho-D-gluconate + NADP(+) = D-ribulose 5-phosphate + CO2 + NADPH. It functions in the pathway carbohydrate degradation; pentose phosphate pathway; D-ribulose 5-phosphate from D-glucose 6-phosphate (oxidative stage): step 3/3. Functionally, catalyzes the oxidative decarboxylation of 6-phosphogluconate to ribulose 5-phosphate and CO(2), with concomitant reduction of NADP to NADPH. The polypeptide is 6-phosphogluconate dehydrogenase, decarboxylating (Pgd) (Drosophila melanogaster (Fruit fly)).